The following is a 310-amino-acid chain: Integrin-binding sialoprotein (310 aa).

The N-terminal stretch at 1–16 (MKTVLILLSILGMACA) is a signal peptide. 7 positions are modified to phosphoserine: serine 31, serine 62, serine 67, serine 75, serine 76, serine 98, and serine 106. The tract at residues 61-284 (QSSSDSSEEN…NGDPRGDNYR (224 aa)) is disordered. Residues 62 to 74 (SSSDSSEENGNGD) are compositionally biased toward low complexity. Composition is skewed to acidic residues over residues 75–87 (SSEE…ETSN) and 96–108 (EDSD…ESEA). The N-linked (GlcNAc...) asparagine glycan is linked to asparagine 110. Threonine 144 is modified (phosphothreonine). Residues 152-174 (DESDEEEEEEEEEENEAEVDDNE) show a composition bias toward acidic residues. Phosphoserine is present on serine 154. Positions 175–187 (QGINGTSSNSTEV) are enriched in polar residues. Residues asparagine 178 and asparagine 183 are each glycosylated (N-linked (GlcNAc...) asparagine). Residues 198–208 (NGEEDGEEESV) show a composition bias toward acidic residues. A compositionally biased stretch (polar residues) spans 209–227 (TEANTEGITVAGETTTSPN). Serine 273 is modified (phosphoserine). Positions 279–281 (RGD) match the Integrin-binding motif motif. Phosphoserine is present on serine 300. Sulfotyrosine occurs at positions 306 and 307.

In terms of assembly, monomer. Interacts with integrins; the interaction promotes cell adhesion.

The protein resides in the secreted. Functionally, binds tightly to hydroxyapatite. Appears to form an integral part of the mineralized matrix. Probably important to cell-matrix interaction. Promotes adhesion and migration of various cells via the alpha-V/beta-3 integrin receptor (ITGAV:ITGB3). The chain is Integrin-binding sialoprotein (IBSP) from Bos taurus (Bovine).